Here is a 529-residue protein sequence, read N- to C-terminus: Bifunctional purine biosynthesis protein PurH (529 aa).

The 148-residue stretch at 1–148 folds into the MGS-like domain; the sequence is MQQRRPVRRA…KNHRDVAIVV (148 aa). Position 287 is an N6-acetyllysine (lysine 287).

It belongs to the PurH family.

The catalysed reaction is (6R)-10-formyltetrahydrofolate + 5-amino-1-(5-phospho-beta-D-ribosyl)imidazole-4-carboxamide = 5-formamido-1-(5-phospho-D-ribosyl)imidazole-4-carboxamide + (6S)-5,6,7,8-tetrahydrofolate. It carries out the reaction IMP + H2O = 5-formamido-1-(5-phospho-D-ribosyl)imidazole-4-carboxamide. It participates in purine metabolism; IMP biosynthesis via de novo pathway; 5-formamido-1-(5-phospho-D-ribosyl)imidazole-4-carboxamide from 5-amino-1-(5-phospho-D-ribosyl)imidazole-4-carboxamide (10-formyl THF route): step 1/1. The protein operates within purine metabolism; IMP biosynthesis via de novo pathway; IMP from 5-formamido-1-(5-phospho-D-ribosyl)imidazole-4-carboxamide: step 1/1. This is Bifunctional purine biosynthesis protein PurH from Escherichia coli O6:K15:H31 (strain 536 / UPEC).